Consider the following 187-residue polypeptide: uncharacterized protein (187 aa).

Residues 26–157 (NRHAAVLLPI…YLDVSRRGQQ (132 aa)) form the Nudix hydrolase domain. A Nudix box motif is present at residues 64–86 (GVADPKDKSIIATALREAEEEVN). Mg(2+)-binding residues include glutamate 80 and glutamate 84.

The protein belongs to the Nudix hydrolase family. PCD1 subfamily. Requires Mn(2+) as cofactor. The cofactor is Mg(2+).

Probably mediates the hydrolysis of some nucleoside diphosphate derivatives. This is an uncharacterized protein from Photorhabdus laumondii subsp. laumondii (strain DSM 15139 / CIP 105565 / TT01) (Photorhabdus luminescens subsp. laumondii).